The primary structure comprises 557 residues: Phosphomethylpyrimidine synthase (557 aa).

Substrate contacts are provided by residues Asn-197, Met-226, Tyr-255, His-291, 311–313 (SRG), 352–355 (DGLR), and Glu-391. His-395 contributes to the Zn(2+) binding site. Residue Tyr-418 participates in substrate binding. Residue His-459 participates in Zn(2+) binding. [4Fe-4S] cluster is bound by residues Cys-539, Cys-542, and Cys-547.

Belongs to the ThiC family. In terms of assembly, homodimer. [4Fe-4S] cluster serves as cofactor.

It catalyses the reaction 5-amino-1-(5-phospho-beta-D-ribosyl)imidazole + S-adenosyl-L-methionine = 4-amino-2-methyl-5-(phosphooxymethyl)pyrimidine + CO + 5'-deoxyadenosine + formate + L-methionine + 3 H(+). The protein operates within cofactor biosynthesis; thiamine diphosphate biosynthesis. Functionally, catalyzes the synthesis of the hydroxymethylpyrimidine phosphate (HMP-P) moiety of thiamine from aminoimidazole ribotide (AIR) in a radical S-adenosyl-L-methionine (SAM)-dependent reaction. This is Phosphomethylpyrimidine synthase from Anaplasma phagocytophilum (strain HZ).